The primary structure comprises 209 residues: MASKTAAAKDIITLHGSAAIVSEFFCYAANSILYNRAVYPEESFVKVKKYGLPMLLIEDESVKSFMSNLTSQISEWLEAGKLQRVVLVIMSKATGEVLERWNFRIETDNEVVDKGVSREKSDKEIMREIQAIMRQVASSVTYLPCLDETCVFDVLAYTDTDVAVPFTWIESDPKLIANPQMVKLHGFDTKIHKVDTLVSYKNDEWDEEE.

The region spanning 15–198 is the HORMA domain; it reads HGSAAIVSEF…TKIHKVDTLV (184 aa).

The protein belongs to the MAD2 family. In terms of assembly, part of the mitotic checkpoint complex (MCC); interacts with MAD1, CDC20-1, CDC20-2 and CDC20-5. Interacts with BUBR1 at chromocenters and with BUB3.1. Interacts with EIF4B3. As to expression, expressed in actively dividing tissues, early in organ development, in young leaves, lateral root primordia and root meristems.

The protein resides in the nucleus. Its subcellular location is the nucleus envelope. The protein localises to the chromosome. It is found in the centromere. It localises to the kinetochore. The protein resides in the cytoplasm. Its subcellular location is the cytoskeleton. The protein localises to the spindle. Functionally, required for the execution of the mitotic checkpoint which monitors the process of kinetochore-spindle attachment and delays the onset of anaphase when this process is not complete. It inhibits the activity of the anaphase promoting complex by sequestering CDC20 until all chromosomes are aligned at the metaphase plate. The sequence is that of Mitotic spindle checkpoint protein MAD2 from Arabidopsis thaliana (Mouse-ear cress).